Reading from the N-terminus, the 557-residue chain is Arginine--tRNA ligase (557 aa).

Positions 132 to 142 (ANPTGDLHLGH) match the 'HIGH' region motif.

This sequence belongs to the class-I aminoacyl-tRNA synthetase family. Monomer.

It is found in the cytoplasm. It catalyses the reaction tRNA(Arg) + L-arginine + ATP = L-arginyl-tRNA(Arg) + AMP + diphosphate. In Bacillus pumilus (strain SAFR-032), this protein is Arginine--tRNA ligase.